The primary structure comprises 161 residues: Dihydrofolate reductase (161 aa).

In terms of domain architecture, DHFR spans 1 to 160; the sequence is MTMVGLIWAQ…LRYRLYSYHR (160 aa). A substrate-binding site is contributed by 7–9; the sequence is IWA. NADP(+)-binding positions include 8–9 and 16–21; these read WA and IGRGGD. Residues D29 and R34 each coordinate substrate. NADP(+) is bound at residue 45–48; that stretch reads GRRT. R62 serves as a coordination point for substrate. NADP(+) is bound by residues 67–70, G82, and 96–101; these read LSRQ and IGGGQV. Substrate is bound by residues Y102 and T115.

It belongs to the dihydrofolate reductase family.

It carries out the reaction (6S)-5,6,7,8-tetrahydrofolate + NADP(+) = 7,8-dihydrofolate + NADPH + H(+). The protein operates within cofactor biosynthesis; tetrahydrofolate biosynthesis; 5,6,7,8-tetrahydrofolate from 7,8-dihydrofolate: step 1/1. In terms of biological role, key enzyme in folate metabolism. Catalyzes an essential reaction for de novo glycine and purine synthesis, and for DNA precursor synthesis. This chain is Dihydrofolate reductase (folA), found in Mycobacterium tuberculosis (strain CDC 1551 / Oshkosh).